Consider the following 223-residue polypeptide: Serum amyloid P-component (223 aa).

A signal peptide spans 1–19 (MNKPLLWISVLTSLLEAFA). The Pentraxin (PTX) domain maps to 24–223 (SGKVFVFPRE…YVIIKPLVWV (200 aa)). N51 carries N-linked (GlcNAc...) asparagine glycosylation. A disulfide bridge links C55 with C114. Residues D77, N78, E155, Q156, D157, and Q167 each contribute to the Ca(2+) site.

Belongs to the pentraxin family. In terms of assembly, homopentamer. Pentraxin (or pentaxin) have a discoid arrangement of 5 non-covalently bound subunits. Requires Ca(2+) as cofactor. Post-translationally, N-glycosylated with a complex biantennary oligosaccharide chain with a sialic acid at the end (disialo-SAP). Monosialo-SAP as well as asioalo-SAP are also detected. Found in serum and urine.

The protein resides in the secreted. In terms of biological role, can interact with DNA and histones and may scavenge nuclear material released from damaged circulating cells. May also function as a calcium-dependent lectin. This Homo sapiens (Human) protein is Serum amyloid P-component (APCS).